Consider the following 171-residue polypeptide: Shikimate kinase (171 aa).

ATP is bound at residue 14–19 (GAGKST). Position 18 (S18) interacts with Mg(2+). Substrate-binding residues include D36, R60, and G82. ATP is bound at residue R120. R139 lines the substrate pocket. Position 156 (Q156) interacts with ATP.

Belongs to the shikimate kinase family. As to quaternary structure, monomer. Mg(2+) serves as cofactor.

It localises to the cytoplasm. The enzyme catalyses shikimate + ATP = 3-phosphoshikimate + ADP + H(+). It participates in metabolic intermediate biosynthesis; chorismate biosynthesis; chorismate from D-erythrose 4-phosphate and phosphoenolpyruvate: step 5/7. Catalyzes the specific phosphorylation of the 3-hydroxyl group of shikimic acid using ATP as a cosubstrate. In Psychromonas ingrahamii (strain DSM 17664 / CCUG 51855 / 37), this protein is Shikimate kinase.